The chain runs to 100 residues: Small ribosomal subunit protein bS6 (100 aa).

Belongs to the bacterial ribosomal protein bS6 family.

Binds together with bS18 to 16S ribosomal RNA. This chain is Small ribosomal subunit protein bS6, found in Tropheryma whipplei (strain Twist) (Whipple's bacillus).